Reading from the N-terminus, the 357-residue chain is Hyaluronidase (357 aa).

The signal sequence occupies residues 1-26; it reads MLLVTLFLFFLQALVNGDSCGSNCEK. 2 disulfide bridges follow: Cys-45/Cys-334 and Cys-211/Cys-223. N-linked (GlcNAc...) asparagine glycans are attached at residues Asn-105 and Asn-125. Catalysis depends on Glu-135, which acts as the Proton donor. Residue Asn-153 is glycosylated (N-linked (GlcNAc...) asparagine). Residue Asn-351 is glycosylated (N-linked (GlcNAc...) asparagine).

The protein belongs to the glycosyl hydrolase 56 family.

The protein localises to the secreted. It catalyses the reaction Random hydrolysis of (1-&gt;4)-linkages between N-acetyl-beta-D-glucosamine and D-glucuronate residues in hyaluronate.. In terms of biological role, hydrolyzes high molecular weight hyaluronic acid to produce small oligosaccharides. This chain is Hyaluronidase, found in Vespa magnifica (Hornet).